Here is a 253-residue protein sequence, read N- to C-terminus: Geranylgeranylglyceryl phosphate synthase (253 aa).

2 residues coordinate Mg(2+): Asp-28 and Ser-53. Residues 172–178 (YLEAGSG), 203–204 (GG), and 225–226 (GN) each bind sn-glycerol 1-phosphate.

This sequence belongs to the GGGP/HepGP synthase family. Group II subfamily. Mg(2+) is required as a cofactor.

It is found in the cytoplasm. The catalysed reaction is sn-glycerol 1-phosphate + (2E,6E,10E)-geranylgeranyl diphosphate = sn-3-O-(geranylgeranyl)glycerol 1-phosphate + diphosphate. Its pathway is membrane lipid metabolism; glycerophospholipid metabolism. Its function is as follows. Prenyltransferase that catalyzes the transfer of the geranylgeranyl moiety of geranylgeranyl diphosphate (GGPP) to the C3 hydroxyl of sn-glycerol-1-phosphate (G1P). This reaction is the first ether-bond-formation step in the biosynthesis of archaeal membrane lipids. The chain is Geranylgeranylglyceryl phosphate synthase from Methanocaldococcus jannaschii (strain ATCC 43067 / DSM 2661 / JAL-1 / JCM 10045 / NBRC 100440) (Methanococcus jannaschii).